The chain runs to 789 residues: Larval serum protein 1 beta chain (789 aa).

A signal peptide spans 1–16 (MKIAIALLACLGLAAA).

This sequence belongs to the hemocyanin family. As to quaternary structure, heterohexamer, composed of three subunits, alpha, beta and gamma. In terms of tissue distribution, larval hemolymph.

The protein resides in the secreted. Its subcellular location is the extracellular space. In terms of biological role, larval storage protein (LSP) which may serve as a store of amino acids for synthesis of adult proteins. The sequence is that of Larval serum protein 1 beta chain (Lsp1beta) from Drosophila melanogaster (Fruit fly).